A 349-amino-acid chain; its full sequence is 4-hydroxy-tetrahydrodipicolinate reductase 2, chloroplastic (349 aa).

The transit peptide at 1–53 (MAANGLMAASSVFLHRPVHPHFSFSSRTNQMVPLGFKGRVSFIGNVKRCFPVV) directs the protein to the chloroplast. Residues 81 to 86 (GCSGKM), 173 to 175 (GTT), and 196 to 199 (SPQM) contribute to the NAD(+) site. H232 serves as the catalytic Proton donor/acceptor. Residue K236 is the Proton donor of the active site. Residue 241–242 (GT) coordinates (S)-2,3,4,5-tetrahydrodipicolinate.

This sequence belongs to the DapB family.

Its subcellular location is the plastid. It is found in the chloroplast. It catalyses the reaction (S)-2,3,4,5-tetrahydrodipicolinate + NAD(+) + H2O = (2S,4S)-4-hydroxy-2,3,4,5-tetrahydrodipicolinate + NADH + H(+). The catalysed reaction is (S)-2,3,4,5-tetrahydrodipicolinate + NADP(+) + H2O = (2S,4S)-4-hydroxy-2,3,4,5-tetrahydrodipicolinate + NADPH + H(+). It functions in the pathway amino-acid biosynthesis; L-lysine biosynthesis via DAP pathway; (S)-tetrahydrodipicolinate from L-aspartate: step 4/4. Its function is as follows. Catalyzes the conversion of 4-hydroxy-tetrahydrodipicolinate (HTPA) to tetrahydrodipicolinate. This Arabidopsis thaliana (Mouse-ear cress) protein is 4-hydroxy-tetrahydrodipicolinate reductase 2, chloroplastic (DAPB2).